The primary structure comprises 147 residues: D-aminoacyl-tRNA deacylase (147 aa).

The short motif at 136–137 (GP) is the Gly-cisPro motif, important for rejection of L-amino acids element.

Belongs to the DTD family. As to quaternary structure, homodimer.

It localises to the cytoplasm. The enzyme catalyses glycyl-tRNA(Ala) + H2O = tRNA(Ala) + glycine + H(+). It catalyses the reaction a D-aminoacyl-tRNA + H2O = a tRNA + a D-alpha-amino acid + H(+). In terms of biological role, an aminoacyl-tRNA editing enzyme that deacylates mischarged D-aminoacyl-tRNAs. Also deacylates mischarged glycyl-tRNA(Ala), protecting cells against glycine mischarging by AlaRS. Acts via tRNA-based rather than protein-based catalysis; rejects L-amino acids rather than detecting D-amino acids in the active site. By recycling D-aminoacyl-tRNA to D-amino acids and free tRNA molecules, this enzyme counteracts the toxicity associated with the formation of D-aminoacyl-tRNA entities in vivo and helps enforce protein L-homochirality. The sequence is that of D-aminoacyl-tRNA deacylase from Streptococcus pneumoniae serotype 2 (strain D39 / NCTC 7466).